The sequence spans 991 residues: Ribonuclease TUDOR 1 (991 aa).

The residue at position 2 (Ala2) is an N-acetylalanine. TNase-like domains are found at residues 8-151 (QWLK…RWSK), 186-364 (KPME…MWAN), 378-557 (QNFT…IHSA), and 587-714 (RRIP…IWEN). Residues 227 to 250 (RTTNGSVVETVPDEPNGDVSAESR) form a disordered region. The Tudor domain occupies 782–847 (NPKRGDIVLA…RPIDPSVSAA (66 aa)). Tyr970 carries the post-translational modification Phosphotyrosine. Residues 971–991 (GDIESDDEDTGPARKPAGGRR) are disordered. The residue at position 975 (Ser975) is a Phosphoserine. Thr980 carries the phosphothreonine modification.

As to expression, expressed in seeds, leaves, flowers, roots and siliques (at protein level). Accumulates in the cap and elongation zone of the root apices (at protein level).

The protein resides in the cytoplasm. It is found in the cytoplasmic granule. Its subcellular location is the perinuclear region. It localises to the endoplasmic reticulum. With respect to regulation, repressed by the specific inhibitor 3',5'-deoxythymidine bisphosphate (pdTp); this RNase activity inhibition impairs subcellular relocation upon abiotic stress and leads to reduced stress resistance. Functionally, cytoprotective ribonuclease (RNase) required for resistance to abiotic stresses, acting as a positive regulator of mRNA decapping during stress. Essential for the integrity and function of cytoplasmic messenger ribonucleoprotein (mRNP) complexes called stress granules (SGs) and processing bodies (PBs), sites of post-transcriptional gene regulation during stress (e.g. salt and heat). Involved in gibberellic acid (GA) biosynthesis. Essential for stress tolerance, probably by regulating mRNAs entering the secretory pathway. Component of stress granules (SGs) that regulates growth under salt stress by modulating levels of GA20OX3 mRNA. Binds GA20OX3 mRNA. May inhibit the degradation of mRNAs involved in stress adaptation. The polypeptide is Ribonuclease TUDOR 1 (Arabidopsis thaliana (Mouse-ear cress)).